Here is a 481-residue protein sequence, read N- to C-terminus: Glutamate-1-semialdehyde 2,1-aminomutase, chloroplastic (481 aa).

Residues 18 to 40 (NQTPKWGFSPSHRRCNPSSSSSA) form a disordered region. The residue at position 321 (lysine 321) is an N6-(pyridoxal phosphate)lysine.

This sequence belongs to the class-III pyridoxal-phosphate-dependent aminotransferase family. HemL subfamily. Homodimer. Requires pyridoxal 5'-phosphate as cofactor.

It is found in the plastid. It localises to the chloroplast. The catalysed reaction is (S)-4-amino-5-oxopentanoate = 5-aminolevulinate. It functions in the pathway porphyrin-containing compound metabolism; protoporphyrin-IX biosynthesis; 5-aminolevulinate from L-glutamyl-tRNA(Glu): step 2/2. It participates in porphyrin-containing compound metabolism; chlorophyll biosynthesis. The chain is Glutamate-1-semialdehyde 2,1-aminomutase, chloroplastic from Solanum lycopersicum (Tomato).